A 123-amino-acid polypeptide reads, in one-letter code: Large ribosomal subunit protein bL12 (123 aa).

The protein belongs to the bacterial ribosomal protein bL12 family. In terms of assembly, homodimer. Part of the ribosomal stalk of the 50S ribosomal subunit. Forms a multimeric L10(L12)X complex, where L10 forms an elongated spine to which 2 to 4 L12 dimers bind in a sequential fashion. Binds GTP-bound translation factors.

Its function is as follows. Forms part of the ribosomal stalk which helps the ribosome interact with GTP-bound translation factors. Is thus essential for accurate translation. The protein is Large ribosomal subunit protein bL12 of Desulfotalea psychrophila (strain LSv54 / DSM 12343).